The primary structure comprises 719 residues: MAEEYELNEIDDTLHGSVGSRLSLFARELKSRRSSSWHGGTALRLPKDLYESLVIHPNGRWYRIWANMMFLWSIYSTFFTPFEFSFFRGLPDQLLDLECVQLVFLADVAVHFFLAYRDPHTYRMVHDKRHIALRYIKGSFALDVLGCFPWDAIYKVTGRVEAVRWLVWVRLYRGRKVMAFFKRVEKDIRVSYLLTRIVKLITVELYCTHTAACGFYYLATTLPPAREGGTWIGSLSLGDARYINFREVDLLTRYVTSLYLAIVTMATVGYGDIHAVNTREMAFTVVYISFSIVLSAYLIGNMTALIVKGSRTERFRDRMTDLIRYMNRNRLGSAIRSQVKDHLMLQYESSYTRDRVIVDDIPVAVRSKMSQTLYLDMVSRVGLFRGCSDDFLSQIVLKLHEEFFLPGEVILEQGTVVDQIYIVAHGCLEEVANGEDGSEEIISELRPYGIVGDVAVICNIPQPYTVRVCELCSLLRIDKQSLTSILQIYFKDNSQILSNLLKGKETESKRKQLESDITYLLAKQESELVLGVNNAAYHGDIFRLKSLISAGADPSKSDYDGRTALHIAALRGYENIVRFLIQRGANVNSIDRFGNSPLLQAVKSGHDRITSLLVEHGAILNLEDAGGYLCRVVRGGRIDLLKKLLRFGISPNCRNYDQRTPLHIAAAEGLHLVASTLIESGADIQAKDRWGNTPLDEGRRCSSKPLVRILEQARTVATN.

Residues 1–63 (MAEEYELNEI…VIHPNGRWYR (63 aa)) are Cytoplasmic-facing. Residues 64–84 (IWANMMFLWSIYSTFFTPFEF) form a helical membrane-spanning segment. Residues 85 to 93 (SFFRGLPDQ) are Extracellular-facing. Residues 94-114 (LLDLECVQLVFLADVAVHFFL) form a helical membrane-spanning segment. At 115-137 (AYRDPHTYRMVHDKRHIALRYIK) the chain is on the cytoplasmic side. Residues 138 to 158 (GSFALDVLGCFPWDAIYKVTG) form a helical membrane-spanning segment. The Extracellular segment spans residues 159–164 (RVEAVR). The helical; Voltage-sensor transmembrane segment at 165–185 (WLVWVRLYRGRKVMAFFKRVE) threads the bilayer. Residues 186 to 199 (KDIRVSYLLTRIVK) lie on the Cytoplasmic side of the membrane. Residues 200 to 220 (LITVELYCTHTAACGFYYLAT) form a helical membrane-spanning segment. The Extracellular portion of the chain corresponds to 221 to 255 (TLPPAREGGTWIGSLSLGDARYINFREVDLLTRYV). Residues 256–275 (TSLYLAIVTMATVGYGDIHA) constitute an intramembrane region (pore-forming). At 276–285 (VNTREMAFTV) the chain is on the extracellular side. The helical transmembrane segment at 286-306 (VYISFSIVLSAYLIGNMTALI) threads the bilayer. The Cytoplasmic portion of the chain corresponds to 307-719 (VKGSRTERFR…LEQARTVATN (413 aa)). 383 to 503 (LFRGCSDDFL…SQILSNLLKG (121 aa)) serves as a coordination point for a nucleoside 3',5'-cyclic phosphate. ANK repeat units lie at residues 523–556 (KQESELVLGVNNAAYHGDIFRLKSLISAGADPSK), 560–589 (DGRTALHIAALRGYENIVRFLIQRGANVNS), 593–622 (FGNSPLLQAVKSGHDRITSLLVEHGAILNL), 624–653 (DAGGYLCRVVRGGRIDLLKKLLRFGISPNC), and 657–686 (DQRTPLHIAAAEGLHLVASTLIESGADIQA).

Belongs to the potassium channel family. Plant (TC 1.A.1.4) subfamily.

The protein resides in the membrane. In terms of biological role, probable outward-rectifying potassium channel. This is Potassium channel KOR2 from Oryza sativa subsp. japonica (Rice).